Consider the following 178-residue polypeptide: RNA pyrophosphohydrolase (178 aa).

The region spanning 18–171 (PYRPCVGLMV…KRKVYEQVVA (154 aa)) is the Nudix hydrolase domain. Residues 59-80 (GGIDKGEDPAQAALRELYEETG) carry the Nudix box motif.

Belongs to the Nudix hydrolase family. RppH subfamily. The cofactor is a divalent metal cation.

Its function is as follows. Accelerates the degradation of transcripts by removing pyrophosphate from the 5'-end of triphosphorylated RNA, leading to a more labile monophosphorylated state that can stimulate subsequent ribonuclease cleavage. In Brucella abortus (strain 2308), this protein is RNA pyrophosphohydrolase.